Here is a 229-residue protein sequence, read N- to C-terminus: 23 kDa piroplasm membrane protein (229 aa).

An N-terminal signal peptide occupies residues 1–19 (MNKYFKVFFFVLLTHALKS). Topologically, residues 20–203 (SLIFGQATLQ…EKEETSKKKY (184 aa)) are extracellular. A helical membrane pass occupies residues 204 to 224 (VLMVVVVVVFVVVASLVVFLV). The Cytoplasmic portion of the chain corresponds to 225-229 (KFCLK).

It is found in the membrane. The protein is 23 kDa piroplasm membrane protein of Theileria annulata.